The following is a 323-amino-acid chain: Small ribosomal subunit protein uS3 (323 aa).

The KH type-2 domain maps to I17–D86. Positions A251–E303 are disordered. Residues G270–E303 show a composition bias toward acidic residues.

The protein belongs to the universal ribosomal protein uS3 family. Part of the 30S ribosomal subunit.

Functionally, binds the lower part of the 30S subunit head. This is Small ribosomal subunit protein uS3 from Haloquadratum walsbyi (strain DSM 16790 / HBSQ001).